The primary structure comprises 281 residues: ATP synthase subunit a (281 aa).

A run of 6 helical transmembrane segments spans residues 50–70 (FSFT…LLLV), 116–136 (FFPC…QGMI), 145–165 (HFLI…IVGF), 172–192 (FLSF…LVLL), 219–239 (VKIL…FYFI), and 246–266 (FIVL…AYVF).

This sequence belongs to the ATPase A chain family. As to quaternary structure, F-type ATPases have 2 components, CF(1) - the catalytic core - and CF(0) - the membrane proton channel. CF(1) has five subunits: alpha(3), beta(3), gamma(1), delta(1), epsilon(1). CF(0) has three main subunits: a, b and c.

It is found in the mitochondrion inner membrane. Its function is as follows. Mitochondrial membrane ATP synthase (F(1)F(0) ATP synthase or Complex V) produces ATP from ADP in the presence of a proton gradient across the membrane which is generated by electron transport complexes of the respiratory chain. F-type ATPases consist of two structural domains, F(1) - containing the extramembraneous catalytic core and F(0) - containing the membrane proton channel, linked together by a central stalk and a peripheral stalk. During catalysis, ATP synthesis in the catalytic domain of F(1) is coupled via a rotary mechanism of the central stalk subunits to proton translocation. Key component of the proton channel; it may play a direct role in the translocation of protons across the membrane. The polypeptide is ATP synthase subunit a (ATP6) (Oenothera berteroana (Bertero's evening primrose)).